Here is a 200-residue protein sequence, read N- to C-terminus: MSTSISTTATPSTPGERAWALFQVLKSKELIPEGYVEQLTQLMAHDWSPENGARVVAKAWVDPQFRALLLKDGTAACAQFGYTGPQGEYIVALEDTPGVKNVIVCSLCSCTNWPVLGLPPEWYKGFEFRARLVREGRTVLRELGTELPSDTVIKVWDTSAESRYLVLPQRPEGSEHMSEEQLQQLVTKDVLIGVALPRVG.

Residues Cys-105, Cys-108, Ser-109, and Cys-110 each coordinate Fe(3+). Position 108 is a cysteine sulfinic acid (-SO2H) (Cys-108). Position 110 is a cysteine sulfenic acid (-SOH) (Cys-110).

Belongs to the nitrile hydratase subunit alpha family. In terms of assembly, heterodimer of an alpha and a beta chain. The cofactor is Fe(3+). Post-translationally, oxidation on Cys-108 is essential for the activity. In terms of processing, oxidation on Cys-110 stabilizes the Fe-NO ligand coordinated in the inactive form.

It catalyses the reaction an aliphatic primary amide = an aliphatic nitrile + H2O. With respect to regulation, inactivated by oxidation of Cys-110 to a sulfenic acid. NHase catalyzes the hydration of various nitrile compounds to the corresponding amides. Industrial production of acrylamide is now being developed using some of the enzymes of this class. In Pseudomonas chlororaphis (Pseudomonas aureofaciens), this protein is Nitrile hydratase subunit alpha (nthA).